A 119-amino-acid polypeptide reads, in one-letter code: Large ribosomal subunit protein uL22 (119 aa).

This sequence belongs to the universal ribosomal protein uL22 family. As to quaternary structure, part of the 50S ribosomal subunit.

Functionally, this protein binds specifically to 23S rRNA; its binding is stimulated by other ribosomal proteins, e.g. L4, L17, and L20. It is important during the early stages of 50S assembly. It makes multiple contacts with different domains of the 23S rRNA in the assembled 50S subunit and ribosome. Its function is as follows. The globular domain of the protein is located near the polypeptide exit tunnel on the outside of the subunit, while an extended beta-hairpin is found that lines the wall of the exit tunnel in the center of the 70S ribosome. The polypeptide is Large ribosomal subunit protein uL22 (Pelodictyon phaeoclathratiforme (strain DSM 5477 / BU-1)).